We begin with the raw amino-acid sequence, 294 residues long: Filamin-B (294 aa).

2 Filamin repeats span residues 1-67 (GTRL…KVRV) and 71-163 (GQAG…KAKV). Phosphoserine occurs at positions 61 and 157. Lys160 is covalently cross-linked (Glycyl lysine isopeptide (Lys-Gly) (interchain with G-Cter in ISG15)). The segment at 164–198 (TGQRLVGPGSTNETSSILVESVTRSSTETCYSAIP) is hinge 2. The segment at 164 to 294 (TGQRLVGPGS…PGSPFHVTVP (131 aa)) is self-association site, tail. 2 positions are modified to phosphoserine: Ser173 and Ser184. The stretch at 199–293 (KASSDASKVT…IPGSPFHVTV (95 aa)) is one Filamin 24 repeat. N6-succinyllysine occurs at positions 210 and 216. Lys268 carries the N6-acetyllysine modification.

This sequence belongs to the filamin family. Homodimer. Interacts with FLNA, FLNC, INPPL1, ITGB1A, ITGB1D, ITGB3, ITGB6, MYOT, MYOZ1, PSEN1 and PSEN2. Interacts with MICALL2. Interacts with RFLNA and RFLNB. Interacts with HTLV-I viral p13 protein. Interacts with ASB2; the interaction targets FLNB for proteasomal degradation. In terms of processing, ISGylation prevents ability to interact with the upstream activators of the JNK cascade and inhibits IFNA-induced JNK signaling. Ubiquitination by a SCF-like complex containing ASB2 leads to proteasomal degradation which promotes muscle differentiation.

Its subcellular location is the cytoplasm. The protein localises to the cell cortex. The protein resides in the cytoskeleton. It is found in the myofibril. It localises to the sarcomere. Its subcellular location is the z line. Functionally, connects cell membrane constituents to the actin cytoskeleton. May promote orthogonal branching of actin filaments and links actin filaments to membrane glycoproteins. Anchors various transmembrane proteins to the actin cytoskeleton. The polypeptide is Filamin-B (FLNB) (Oryctolagus cuniculus (Rabbit)).